The following is a 928-amino-acid chain: Probable outer membrane protein pmp11 (928 aa).

The signal sequence occupies residues 1 to 24 (MKTSIPWVLVSSVLAFSCHLQSLA). The region spanning 627 to 928 (GMEHKQGFWV…NVDVGTKLRF (302 aa)) is the Autotransporter domain.

It belongs to the PMP outer membrane protein family.

It is found in the secreted. It localises to the cell wall. The protein localises to the cell outer membrane. The sequence is that of Probable outer membrane protein pmp11 (pmp11) from Chlamydia pneumoniae (Chlamydophila pneumoniae).